Consider the following 702-residue polypeptide: Polyribonucleotide nucleotidyltransferase (702 aa).

Positions 485 and 491 each coordinate Mg(2+). The KH domain occupies 552-611 (PKTSTLQIDPEKIRDVIGAGGKVINKIIADTGVKIDIKEDGLVYVSSAESEGVKEAVKII). Residues 621-689 (GEIYLGKVTK…SQGRINLSRK (69 aa)) form the S1 motif domain.

It belongs to the polyribonucleotide nucleotidyltransferase family. Requires Mg(2+) as cofactor.

It is found in the cytoplasm. The catalysed reaction is RNA(n+1) + phosphate = RNA(n) + a ribonucleoside 5'-diphosphate. Involved in mRNA degradation. Catalyzes the phosphorolysis of single-stranded polyribonucleotides processively in the 3'- to 5'-direction. In Clostridium perfringens (strain SM101 / Type A), this protein is Polyribonucleotide nucleotidyltransferase.